The sequence spans 214 residues: MTSSEPASPEIEQQANSAPRRPRILLAASGSVAAIKFGNLCHSFSEWAEVKAVATRASLHFIDRASLPKDVILYTEEDEWSTWNKVGDSVLHIELRSWADILVIAPLSANTLGKIAGGLCDNLLTCIVRAWDYSKPFFVAPAMNTLMWKNPFTEQHIMSIDELGVSLIPPVTKRLACGDYGNGAMAEPSVIYSTVRLFFESRVQQSGNIVQQPV.

Residues 30 to 32 (GSV) and 55 to 57 (TRA) each bind FMN. Histidine 92 serves as the catalytic Proton donor. FMN contacts are provided by residues 108-111 (SANT) and alanine 142. N-[(R)-4-phosphopantothenoyl]-L-cysteine is bound by residues asparagine 144, arginine 174, and alanine 176. The active-site Proton donor is the cysteine 177. Position 185 (methionine 185) interacts with N-[(R)-4-phosphopantothenoyl]-L-cysteine.

The protein belongs to the HFCD (homooligomeric flavin containing Cys decarboxylase) superfamily. As to quaternary structure, homotrimer. Requires FMN as cofactor. As to expression, mainly expressed in stems, to a lower extent in flowers, leaves and fruits, and at basal levels in roots.

The protein resides in the cell membrane. It localises to the cytoplasm. The catalysed reaction is N-[(R)-4-phosphopantothenoyl]-L-cysteine + H(+) = (R)-4'-phosphopantetheine + CO2. The protein operates within cofactor biosynthesis; coenzyme A biosynthesis; CoA from (R)-pantothenate: step 3/5. Functionally, involved in plant growth, and promotes salt and osmotic tolerance, probably via coenzyme A (CoA) accumulation and endogenous proline accumulation. Catalyzes the decarboxylation of 4'-phosphopantothenoylcysteine to 4'-phosphopantetheine, a key step in coenzyme A biosynthesis. Required for roots development. The protein is Phosphopantothenoylcysteine decarboxylase HAL3 of Malus domestica (Apple).